A 279-amino-acid chain; its full sequence is Dermonecrotic toxin LspiSicTox-betaIE3i (279 aa).

Residue His-5 is part of the active site. The Mg(2+) site is built by Glu-25 and Asp-27. The active-site Nucleophile is His-41. 2 disulfides stabilise this stretch: Cys-45–Cys-51 and Cys-47–Cys-190. Mg(2+) is bound at residue Asp-85.

Belongs to the arthropod phospholipase D family. Class II subfamily. Mg(2+) is required as a cofactor. Expressed by the venom gland.

The protein localises to the secreted. It catalyses the reaction an N-(acyl)-sphingosylphosphocholine = an N-(acyl)-sphingosyl-1,3-cyclic phosphate + choline. The catalysed reaction is an N-(acyl)-sphingosylphosphoethanolamine = an N-(acyl)-sphingosyl-1,3-cyclic phosphate + ethanolamine. It carries out the reaction a 1-acyl-sn-glycero-3-phosphocholine = a 1-acyl-sn-glycero-2,3-cyclic phosphate + choline. The enzyme catalyses a 1-acyl-sn-glycero-3-phosphoethanolamine = a 1-acyl-sn-glycero-2,3-cyclic phosphate + ethanolamine. Functionally, dermonecrotic toxins cleave the phosphodiester linkage between the phosphate and headgroup of certain phospholipids (sphingolipid and lysolipid substrates), forming an alcohol (often choline) and a cyclic phosphate. This toxin acts on sphingomyelin (SM). It may also act on ceramide phosphoethanolamine (CPE), lysophosphatidylcholine (LPC) and lysophosphatidylethanolamine (LPE), but not on lysophosphatidylserine (LPS), and lysophosphatidylglycerol (LPG). It acts by transphosphatidylation, releasing exclusively cyclic phosphate products as second products. Induces dermonecrosis, hemolysis, increased vascular permeability, edema, inflammatory response, and platelet aggregation. The protein is Dermonecrotic toxin LspiSicTox-betaIE3i of Loxosceles spinulosa (Recluse spider).